Here is a 190-residue protein sequence, read N- to C-terminus: dTTP/UTP pyrophosphatase (190 aa).

Aspartate 71 functions as the Proton acceptor in the catalytic mechanism.

The protein belongs to the Maf family. YhdE subfamily. The cofactor is a divalent metal cation.

The protein resides in the cytoplasm. The catalysed reaction is dTTP + H2O = dTMP + diphosphate + H(+). It carries out the reaction UTP + H2O = UMP + diphosphate + H(+). Nucleoside triphosphate pyrophosphatase that hydrolyzes dTTP and UTP. May have a dual role in cell division arrest and in preventing the incorporation of modified nucleotides into cellular nucleic acids. The chain is dTTP/UTP pyrophosphatase from Xanthomonas oryzae pv. oryzae (strain MAFF 311018).